A 226-amino-acid chain; its full sequence is Phosphate propanoyltransferase (226 aa).

44 to 46 (VSN) is a CoA binding site. His-48 and His-50 together coordinate Zn(2+). 3 residues coordinate CoA: Met-72, Lys-90, and Arg-97. Residue Arg-103 participates in phosphate binding. Zn(2+) is bound at residue Glu-109. Phe-116 contributes to the CoA binding site. Zn(2+) contacts are provided by His-157, His-159, and His-204. A CoA-binding site is contributed by Asn-211.

This sequence belongs to the PduL family. As to quaternary structure, full-length protein forms large oligomers. Homodimer, when purified in the absence of the encapsulation peptide (EP, residues 1-47). The EP may influence oligomerization. It depends on Zn(2+) as a cofactor.

The protein resides in the bacterial microcompartment. It carries out the reaction propanoyl-CoA + phosphate = propanoyl phosphate + CoA. Its pathway is polyol metabolism; 1,2-propanediol degradation. In terms of biological role, involved in 1,2-propanediol (1,2-PD) utilization within the bacterial microcompartment (BMC) dedicated to 1,2-PD degradation by catalyzing the conversion of propanoyl-CoA to propanoyl-phosphate. CoA is regenerated within the pdu BMC (for use by PduP) via this enzyme, although there must also be cofactor transport across the BMC. Directly targeted to the BMC. Phosphate is probably the first substrate to bind in the forward direction. CoA is probably the first substrate to bind in the reverse direction, and might bind to the enzyme as the BMC assembles, ensuring cofactor encapsulation. This is Phosphate propanoyltransferase from Rhodopseudomonas palustris (strain BisB18).